The following is a 591-amino-acid chain: Aspartate--tRNA ligase (591 aa).

Glu-173 contributes to the L-aspartate binding site. The segment at 197 to 200 (QLFK) is aspartate. Arg-219 provides a ligand contact to L-aspartate. ATP-binding positions include 219–221 (RDE) and Gln-228. His-448 is a binding site for L-aspartate. Glu-482 contacts ATP. An L-aspartate-binding site is contributed by Arg-489. Residue 534-537 (GLDR) coordinates ATP.

It belongs to the class-II aminoacyl-tRNA synthetase family. Type 1 subfamily. Homodimer.

The protein resides in the cytoplasm. The enzyme catalyses tRNA(Asp) + L-aspartate + ATP = L-aspartyl-tRNA(Asp) + AMP + diphosphate. Its function is as follows. Catalyzes the attachment of L-aspartate to tRNA(Asp) in a two-step reaction: L-aspartate is first activated by ATP to form Asp-AMP and then transferred to the acceptor end of tRNA(Asp). In Shewanella oneidensis (strain ATCC 700550 / JCM 31522 / CIP 106686 / LMG 19005 / NCIMB 14063 / MR-1), this protein is Aspartate--tRNA ligase.